We begin with the raw amino-acid sequence, 4115 residues long: Transcription-associated protein 1 (4115 aa).

Residues 1-11 (MDPSIPSTSHR) show a composition bias toward polar residues. Disordered regions lie at residues 1–21 (MDPSIPSTSHRSVPPDRGVQP) and 543–563 (ESEQKRNELPTPTKEHTKKTS). The span at 544–563 (SEQKRNELPTPTKEHTKKTS) shows a compositional bias: basic and acidic residues. TPR repeat units follow at residues 1341-1374 (LDGLQRFVFICPEGFEFEKDSEIYKRYLVHLLDL) and 1820-1853 (QDYDMFFNVVSVFMGKFQTDFTFVREYLEVEVIP). Residues 2678-2701 (LEEPEPMEVDQPKNAPAEEPKDNK) form a disordered region. The FAT domain occupies 2808–3421 (LIEFISSKHE…SNGASKVSKS (614 aa)). Residues 2855–2888 (IETLESLGALYKELAEFDQYSAIWERRSVFPETM) form a TPR 3 repeat. The PI3K/PI4K catalytic domain occupies 3740–4100 (EPYFEIVMRG…CNSLIIRAKD (361 aa)). Residues 3746 to 3752 (VMRGGQV) are G-loop. A catalytic loop region spans residues 3959–3967 (NLSPMTPHQ). The activation loop stretch occupies residues 3979-4006 (NPFYRFELGTGQLMDIEHFAHEVPFRLT). The region spanning 4083 to 4115 (DAKVKKDDCNSLIIRAKDSDNLSRMPPTYHAWF) is the FATC domain.

Belongs to the PI3/PI4-kinase family. TRA1 subfamily.

The protein localises to the nucleus. Functionally, influences germ cell fate in hermaphrodites. Acts downstream of tra-2 and tra-3 and through the Tip60 histone acetyltransferase complex to regulate germ cell fate decisions. Required for spermatogenesis and embryonic development. Acts with tra-2 to promote expression of fog-3 and control male tail development. Involved in the negative regulation of vulval development. This is Transcription-associated protein 1 from Caenorhabditis briggsae.